The chain runs to 362 residues: sn-glycerol-3-phosphate import ATP-binding protein UgpC (362 aa).

The ABC transporter domain maps to 4–235; that stretch reads LSFRNVKKTY…PASTFVAGFI (232 aa). ATP is bound at residue 37–44; it reads GPSGCGKS.

Belongs to the ABC transporter superfamily. sn-glycerol-3-phosphate importer (TC 3.A.1.1.3) family. The complex is composed of two ATP-binding proteins (UgpC), two transmembrane proteins (UgpA and UgpE) and a solute-binding protein (UgpB).

It localises to the cell inner membrane. It carries out the reaction sn-glycerol 3-phosphate(out) + ATP + H2O = sn-glycerol 3-phosphate(in) + ADP + phosphate + H(+). Functionally, part of the ABC transporter complex UgpBAEC involved in sn-glycerol-3-phosphate (G3P) import. Responsible for energy coupling to the transport system. The chain is sn-glycerol-3-phosphate import ATP-binding protein UgpC from Bordetella pertussis (strain Tohama I / ATCC BAA-589 / NCTC 13251).